The chain runs to 197 residues: Small ribosomal subunit protein uS4y (197 aa).

One can recognise an S4 RNA-binding domain in the interval 109 to 183; it reads RRLQTIVFKS…VKRRNERAGA (75 aa). Positions 161-197 are disordered; the sequence is SLTSPFGGGRPGRVKRRNERAGAKKASGGDGDEDDEE.

The protein belongs to the universal ribosomal protein uS4 family. As to quaternary structure, binds to the translation initiation factors TIF3E1.

The chain is Small ribosomal subunit protein uS4y (RPS9C) from Arabidopsis thaliana (Mouse-ear cress).